We begin with the raw amino-acid sequence, 289 residues long: MKIKDFLQENKISVGDNAIFLLEKLGIKDENLIKFLEREIGESAKMSKSKANVVDPEEAVEKYGADTVRLYILFAAPPEQDFEWTDEGIQGAYRFLQRYWNFVNKHLEKIKNLTYTVEELRNVQGKAKEVRREIHQTIADYRRDFEERYQFNTAIAKIMKLLNTLQDFSPQTEQDYKVLREGIETITLLLSPITPHIAEEVWEMLGNEGFIINQPIPEPDPEALKVEEIEIPVQVNGKLRARVKVPADADEETVKNIVLSDERVQKWVQGKEVKKFIYVKGKLVNVVVK.

The 'KMSKS' region motif lies at 45–49; it reads KMSKS. Residue K48 participates in ATP binding.

This sequence belongs to the class-I aminoacyl-tRNA synthetase family. In terms of assembly, seems to consist of an alpha chain and a beta chain.

Its subcellular location is the cytoplasm. The enzyme catalyses tRNA(Leu) + L-leucine + ATP = L-leucyl-tRNA(Leu) + AMP + diphosphate. The sequence is that of Leucine--tRNA ligase subunit beta (leuS') from Aquifex aeolicus (strain VF5).